The chain runs to 118 residues: Small ribosomal subunit protein uS13 (118 aa).

Positions 91 to 118 are disordered; sequence HRRGLPVRGQRTKTNARTRKGPRKPIKK.

It belongs to the universal ribosomal protein uS13 family. In terms of assembly, part of the 30S ribosomal subunit. Forms a loose heterodimer with protein S19. Forms two bridges to the 50S subunit in the 70S ribosome.

Functionally, located at the top of the head of the 30S subunit, it contacts several helices of the 16S rRNA. In the 70S ribosome it contacts the 23S rRNA (bridge B1a) and protein L5 of the 50S subunit (bridge B1b), connecting the 2 subunits; these bridges are implicated in subunit movement. Contacts the tRNAs in the A and P-sites. The sequence is that of Small ribosomal subunit protein uS13 from Photorhabdus laumondii subsp. laumondii (strain DSM 15139 / CIP 105565 / TT01) (Photorhabdus luminescens subsp. laumondii).